The following is a 648-amino-acid chain: Chaperone protein HtpG (648 aa).

Positions 1–353 (MNARVEQLEF…AQDMSLNVSR (353 aa)) are a; substrate-binding. The segment at 354–567 (EILQQDRQIK…TFGITPALAR (214 aa)) is b. Residues 568–648 (IYRATGQDVP…LLADRLTRTL (81 aa)) form a c region.

The protein belongs to the heat shock protein 90 family. As to quaternary structure, homodimer.

Its subcellular location is the cytoplasm. In terms of biological role, molecular chaperone. Has ATPase activity. The chain is Chaperone protein HtpG from Mycobacterium ulcerans (strain Agy99).